The chain runs to 728 residues: Microtubule-associated protein VP5 (728 aa).

It belongs to the reoviridae microtubule-associated protein family.

The protein localises to the virion. It localises to the host cytoplasm. The protein resides in the host cytoskeleton. In terms of biological role, minor inner capsid component. Displays NTPase and RNA 5'-triphosphatase (RTPase) activities. May function as a cofactor of polymerase. Associates with microtubules and plays a role in the formation, structural organization and morphology of viral inclusions, where the assembly of cores and the replication of viral RNA occur. This is Microtubule-associated protein VP5 (S5) from Aquareovirus C (isolate Golden shiner/USA/GSRV/1977) (AQRV-C).